A 1069-amino-acid chain; its full sequence is MVRMAERLAENFIPEANQRNENEPAYSRYKRVGQNRSRLNSRASLGSSMGRRITLIETDSGVIEVESDKQFLDAFKDANMDAVHHLNAASPVTRGLWCMIIIAFVILVLVQCYSQIKLYISEPVATNIEAEYPSKISFPTVAICNNNQFRLTYLTGGRIMNRRSKSISGSLLSTGHDVESVFDTVLRKSWDMDAVKFLRSAAHWKSRMILGCTWPNGTSCKLSDFKAVWTTTGLCWAINTDPHNPYEVTGSGEGHGLRLLLNVESYERVDACTKHFRTKTLPGLKILIYNQTDIPDSSMNGVNVPSGYSMDIPFKMQHRSKLTGVHCIEENDEQIEASTDFNNPENIRTCTLRRYMTEVENSCHCTLRRAYTSNSTDVKMKACNVDQYFGCAQKAMQRIREEGTASTCLPPCKSIDYTAWQDMNRLPQNLMPALIEEQEEDDEDDVEQEELDENVSFSTVSGGETFSCEDSAYLDDKQVMRIKRDAHRAYEMQARHQEDIFLRSRRLIARLRNAINSIERYKWGWHYDTFSGVADRLSNLTCFSNFSERHRDIISILESRPITSEEKKANQMFFLLDETAFNRNATRYMSVGDLKSRYGDKVDDVAEEIAVILRIMEKLWHVFMPDSYIRTMTGDFSRMDRIIELMNQYELNKLQRRAWAEKMQSRQMKHFFEDDFYESYYQPLIKDLDTTLVKQIDEVEADWPKVEYYLQRGSAGKTGAIMFFGDGNKDNRQKFEKLIVEMHECASGKMRKEAGKMLSSFKKSYRELQAAYGKLFKEELPDYLENFQFGNKFVGDNFAMVNIFLHRMNLEVWSQDRTYGFWSLACDIGGALGLFLGASLLTIIEIVYLCIQYGLCGKRARNMKCIPMDALTRQMKKVATCSCCKKPIEKSREPIYKKKSQSYQRRFTADDEDQGDKFRSRASSEESKRRKNIWAQMNDPSGNSTLTPSEIKNFLDQVQRNSQPPSYHDDHHPEDHYYYNDPNYLTISPPSDRPEDNREGSTSGYYSSPRAPPQANPRDESPIPDTEPISVSEFSDALAPPLFKTPPRERRTRKEQKIDEEDDDKHSYV.

The Cytoplasmic segment spans residues 1-95 (MVRMAERLAE…LNAASPVTRG (95 aa)). The chain crosses the membrane as a helical span at residues 96-116 (LWCMIIIAFVILVLVQCYSQI). Over 117–830 (KLYISEPVAT…FWSLACDIGG (714 aa)) the chain is Extracellular. N-linked (GlcNAc...) asparagine glycans are attached at residues N216, N290, N374, N454, N539, N545, and N584. Residues 831 to 851 (ALGLFLGASLLTIIEIVYLCI) form a helical membrane-spanning segment. The Cytoplasmic segment spans residues 852-1069 (QYGLCGKRAR…EEDDDKHSYV (218 aa)). Disordered stretches follow at residues 898–948 (KKSQ…TLTP) and 960–1069 (RNSQ…HSYV). A compositionally biased stretch (basic and acidic residues) spans 915 to 928 (GDKFRSRASSEESK). Polar residues predominate over residues 938-948 (NDPSGNSTLTP). The span at 967 to 978 (YHDDHHPEDHYY) shows a compositional bias: basic and acidic residues.

This sequence belongs to the amiloride-sensitive sodium channel (TC 1.A.6) family.

The protein resides in the membrane. This chain is Degenerin-like protein del-10, found in Caenorhabditis elegans.